We begin with the raw amino-acid sequence, 359 residues long: uncharacterized protein (359 aa).

Position 46–53 (46–53 (GPKSSGKS)) interacts with ATP.

Belongs to the archaeal ATPase family.

This is an uncharacterized protein from Methanocaldococcus jannaschii (strain ATCC 43067 / DSM 2661 / JAL-1 / JCM 10045 / NBRC 100440) (Methanococcus jannaschii).